Here is a 398-residue protein sequence, read N- to C-terminus: uncharacterized protein (398 aa).

A helical transmembrane segment spans residues Ile-88–Val-108.

It to B.megaterium SpoIV.

It localises to the cell membrane. This is an uncharacterized protein from Bacillus subtilis (strain 168).